The following is a 643-amino-acid chain: Pescadillo homolog (643 aa).

The span at 305–323 shows a compositional bias: basic and acidic residues; sequence EKTKEKNHKSDNNPHEHTT. Positions 305-329 are disordered; it reads EKTKEKNHKSDNNPHEHTTNIDNNN. The BRCT domain maps to 378–474; it reads KLKELFKNHI…NILPCSDYLT (97 aa). The stretch at 531–615 forms a coiled coil; sequence NYKEEEEEEN…IVLSKKKRKL (85 aa).

The protein belongs to the pescadillo family. Interacts with dual specificity protein phosphatase YVH1.

The protein localises to the nucleus. It is found in the nucleolus. It localises to the nucleoplasm. Required for maturation of ribosomal RNAs and formation of the large ribosomal subunit. This Plasmodium falciparum (isolate 3D7) protein is Pescadillo homolog.